The chain runs to 318 residues: Protein RecA (318 aa).

53 to 60 contacts ATP; the sequence is GPESSGKT.

The protein belongs to the RecA family.

The protein localises to the cytoplasm. Can catalyze the hydrolysis of ATP in the presence of single-stranded DNA, the ATP-dependent uptake of single-stranded DNA by duplex DNA, and the ATP-dependent hybridization of homologous single-stranded DNAs. It interacts with LexA causing its activation and leading to its autocatalytic cleavage. In Bacteroides fragilis (strain YCH46), this protein is Protein RecA.